The sequence spans 224 residues: Toxin coregulated pilin (224 aa).

Residues 1 to 25 (MQLLKQLFKKKFVKEEHDKKTGQEG) constitute a propeptide, atypical leader sequence. Methionine 26 carries the N-methylmethionine modification. A helical transmembrane segment spans residues 26-46 (MTLLEVIIVLGIMGVVSAGVV). Cysteine 145 and cysteine 211 are joined by a disulfide.

It is found in the fimbrium. Its subcellular location is the membrane. In terms of biological role, major component of the toxin co-regulated pilus (tcp) which is a type IV pilus essential for bacterial aggregation and subsequent colonization in the host small intestine. In Vibrio cholerae serotype O1 (strain ATCC 39315 / El Tor Inaba N16961), this protein is Toxin coregulated pilin (tcpA).